Consider the following 379-residue polypeptide: Class V chitinase (379 aa).

The N-terminal stretch at methionine 1–alanine 24 is a signal peptide. Residues valine 27–threonine 369 enclose the GH18 domain. Glycine 99 contributes to the chitin binding site. The active-site Proton donor is glutamate 140. Tyrosine 259 contacts chitin. Residues asparagine 307 and asparagine 327 are each glycosylated (N-linked (GlcNAc...) asparagine). Tryptophan 348 is a binding site for chitin.

The protein belongs to the glycosyl hydrolase 18 family. Chitinase class V subfamily.

It catalyses the reaction Random endo-hydrolysis of N-acetyl-beta-D-glucosaminide (1-&gt;4)-beta-linkages in chitin and chitodextrins.. It carries out the reaction Hydrolysis of N,N'-diacetylchitobiose from the non-reducing end of chitin and chitodextrins.. It functions in the pathway glycan degradation; chitin degradation. In terms of biological role, can hydrolyze glycol chitin and chitin oligosaccharides (e.g. N-acetylglucosamine) (GlcNAc)4, (GlcNAc)5 and (GlcNAc)6. Hydrolyzes N-acetylglucosamine oligomers producing dimers from the non-reducing end of the substrates. The chain is Class V chitinase from Arabidopsis thaliana (Mouse-ear cress).